Consider the following 245-residue polypeptide: Protein DEHYDRATION-INDUCED 19 homolog 4 (245 aa).

The protein belongs to the Di19 family.

The sequence is that of Protein DEHYDRATION-INDUCED 19 homolog 4 (DI19-4) from Oryza sativa subsp. japonica (Rice).